Here is a 215-residue protein sequence, read N- to C-terminus: Probable transaldolase (215 aa).

The active-site Schiff-base intermediate with substrate is K83.

This sequence belongs to the transaldolase family. Type 3B subfamily.

The protein resides in the cytoplasm. It catalyses the reaction D-sedoheptulose 7-phosphate + D-glyceraldehyde 3-phosphate = D-erythrose 4-phosphate + beta-D-fructose 6-phosphate. It functions in the pathway carbohydrate degradation; pentose phosphate pathway; D-glyceraldehyde 3-phosphate and beta-D-fructose 6-phosphate from D-ribose 5-phosphate and D-xylulose 5-phosphate (non-oxidative stage): step 2/3. In terms of biological role, transaldolase is important for the balance of metabolites in the pentose-phosphate pathway. This chain is Probable transaldolase, found in Bdellovibrio bacteriovorus (strain ATCC 15356 / DSM 50701 / NCIMB 9529 / HD100).